Reading from the N-terminus, the 480-residue chain is Probable histone deacetylase 1-A (480 aa).

The interval 10–321 (KVCYYYDGDV…WTYETAVALD (312 aa)) is histone deacetylase. His141 is an active-site residue. The segment at 388 to 480 (SIHDDSGEED…KRVKEETKSV (93 aa)) is disordered. The span at 401-416 (PDKRISIRSSDKRIAC) shows a compositional bias: basic and acidic residues. The span at 417–427 (DEEFSDSEDEG) shows a compositional bias: acidic residues. Positions 443–480 (VKTEEEKEGEDKKDVKEEEKAKDEKTDSKRVKEETKSV) are enriched in basic and acidic residues.

The protein belongs to the histone deacetylase family. HD type 1 subfamily. Part of a large multiprotein complex that also contains RBBP4. As to expression, oocyte.

Its subcellular location is the nucleus. The protein resides in the cytoplasm. The enzyme catalyses N(6)-acetyl-L-lysyl-[histone] + H2O = L-lysyl-[histone] + acetate. The catalysed reaction is N(6)-acetyl-L-lysyl-[protein] + H2O = L-lysyl-[protein] + acetate. It carries out the reaction N(6)-(2E)-butenoyl-L-lysyl-[protein] + H2O = (2E)-2-butenoate + L-lysyl-[protein]. Its function is as follows. Histone deacetylase that catalyzes the deacetylation of lysine residues on the N-terminal part of the core histones (H2A, H2B, H3 and H4). Histone deacetylation gives a tag for epigenetic repression and plays an important role in transcriptional regulation, cell cycle progression and developmental events. Histone deacetylases act via the formation of large multiprotein complexes. Also functions as deacetylase for non-histone proteins. In addition to protein deacetylase activity, also has protein-lysine deacylase activity: acts as a protein decrotonylase by mediating decrotonylation ((2E)-butenoyl) of histones. The chain is Probable histone deacetylase 1-A (hdac1-a) from Xenopus laevis (African clawed frog).